The sequence spans 256 residues: MDRRSRAHQWRRARHNYNDLCPPIGRRAATALLWLSCSIALLRALASSNARAQQRAAQRRSFLNAHHRSAAAAAAAQVLPESSESESDHEHEEAEPELARPECLEYDQDDYETETDSETEPESDIQSETEFETEPETEPETAPTTEPETEPEDERGPRGATFNQSLTQRLHALKLQSADASPRRAQPTTQEPESASEGEEPQREPLDEDPRDPEESEERREANRQPRRCKTRRPARRRDQSPESPPRKGPIPIRRH.

Positions 1–46 (MDRRSRAHQWRRARHNYNDLCPPIGRRAATALLWLSCSIALLRALA) are cleaved as a signal peptide. The tract at residues 61-256 (SFLNAHHRSA…RKGPIPIRRH (196 aa)) is disordered. The span at 86-103 (ESDHEHEEAEPELARPEC) shows a compositional bias: basic and acidic residues. Acidic residues-rich tracts occupy residues 104–139 (LEYD…ETEP) and 206–216 (LDEDPRDPEES). The segment covering 225–236 (QPRRCKTRRPAR) has biased composition (basic residues).

Belongs to the NESP55 family. Post-translationally, binds keratan sulfate chains. May be proteolytically processed to give rise to a number of active peptides.

The protein resides in the cytoplasmic vesicle. It is found in the secretory vesicle. It localises to the synaptic vesicle. The protein localises to the secreted. The protein is Neuroendocrine secretory protein 55 of Rattus norvegicus (Rat).